Reading from the N-terminus, the 130-residue chain is Large ribosomal subunit protein bL12 (130 aa).

It belongs to the bacterial ribosomal protein bL12 family. Homodimer. Part of the ribosomal stalk of the 50S ribosomal subunit. Forms a multimeric L10(L12)X complex, where L10 forms an elongated spine to which 2 to 4 L12 dimers bind in a sequential fashion. Binds GTP-bound translation factors.

Functionally, forms part of the ribosomal stalk which helps the ribosome interact with GTP-bound translation factors. Is thus essential for accurate translation. This Mycobacterium bovis (strain ATCC BAA-935 / AF2122/97) protein is Large ribosomal subunit protein bL12.